A 410-amino-acid chain; its full sequence is Arginine biosynthesis bifunctional protein ArgJ (410 aa).

Positions 160, 186, 197, 283, 405, and 410 each coordinate substrate. Thr-197 serves as the catalytic Nucleophile.

This sequence belongs to the ArgJ family. Heterotetramer of two alpha and two beta chains.

Its subcellular location is the cytoplasm. It carries out the reaction N(2)-acetyl-L-ornithine + L-glutamate = N-acetyl-L-glutamate + L-ornithine. The enzyme catalyses L-glutamate + acetyl-CoA = N-acetyl-L-glutamate + CoA + H(+). It participates in amino-acid biosynthesis; L-arginine biosynthesis; L-ornithine and N-acetyl-L-glutamate from L-glutamate and N(2)-acetyl-L-ornithine (cyclic): step 1/1. It functions in the pathway amino-acid biosynthesis; L-arginine biosynthesis; N(2)-acetyl-L-ornithine from L-glutamate: step 1/4. Its activity is regulated as follows. Competitively inhibited by L-ornithine. In terms of biological role, catalyzes two activities which are involved in the cyclic version of arginine biosynthesis: the synthesis of N-acetylglutamate from glutamate and acetyl-CoA as the acetyl donor, and of ornithine by transacetylation between N(2)-acetylornithine and glutamate. The protein is Arginine biosynthesis bifunctional protein ArgJ of Geobacillus stearothermophilus (Bacillus stearothermophilus).